A 418-amino-acid chain; its full sequence is MKLFVQLVLFISLFIPYSTKAVLYVDIKKSNIGNIDLVVSKCACKTEVENELSESITKVIETNLSNCGLFNVKRDAKVESWKSDTVVTISLSEVSNRNLELSFRLSDSFTNRELLTQSVVFLAKDWRKISHLVSDLIHDRLIGEKGHFNTKITYIAEEKDSNYKSVRKIAVMNQDGSNIKYLTNGEKFVSTPRFSPNGKGIVYISYTNGKSYIILKNLKDNTESIISAFEGVISAPRFSPDGKSLFISHSLSGETNILSLDLSSKRTKKITKGSAISTSPSLSPDQKYMVFSSDISGSQQLYIIDFTKKSKKPKRISFGNGRYATPVWSPKGDLIAFTKIQSGKFYIGVMKPDGKEERLLSEGHKIESPAWLPNGREIIFTNAESPSNSKLYLVDLVKKNQKMVFTPTNASLPDWSYF.

A signal peptide spans methionine 1–alanine 21.

The protein belongs to the TolB family. As to quaternary structure, the Tol-Pal system is composed of five core proteins: the inner membrane proteins TolA, TolQ and TolR, the periplasmic protein TolB and the outer membrane protein Pal. They form a network linking the inner and outer membranes and the peptidoglycan layer.

Its subcellular location is the periplasm. In terms of biological role, part of the Tol-Pal system, which plays a role in outer membrane invagination during cell division and is important for maintaining outer membrane integrity. This chain is Tol-Pal system protein TolB, found in Wolbachia pipientis subsp. Culex pipiens (strain wPip).